The primary structure comprises 227 residues: Enolase-phosphatase E1 (227 aa).

It belongs to the HAD-like hydrolase superfamily. MasA/MtnC family. As to quaternary structure, monomer. The cofactor is Mg(2+).

It catalyses the reaction 5-methylsulfanyl-2,3-dioxopentyl phosphate + H2O = 1,2-dihydroxy-5-(methylsulfanyl)pent-1-en-3-one + phosphate. It participates in amino-acid biosynthesis; L-methionine biosynthesis via salvage pathway; L-methionine from S-methyl-5-thio-alpha-D-ribose 1-phosphate: step 3/6. The protein operates within amino-acid biosynthesis; L-methionine biosynthesis via salvage pathway; L-methionine from S-methyl-5-thio-alpha-D-ribose 1-phosphate: step 4/6. Bifunctional enzyme that catalyzes the enolization of 2,3-diketo-5-methylthiopentyl-1-phosphate (DK-MTP-1-P) into the intermediate 2-hydroxy-3-keto-5-methylthiopentenyl-1-phosphate (HK-MTPenyl-1-P), which is then dephosphorylated to form the acireductone 1,2-dihydroxy-3-keto-5-methylthiopentene (DHK-MTPene). The chain is Enolase-phosphatase E1 from Methylococcus capsulatus (strain ATCC 33009 / NCIMB 11132 / Bath).